We begin with the raw amino-acid sequence, 288 residues long: Undecaprenyl-diphosphatase (288 aa).

The next 8 helical transmembrane spans lie at 25-45 (GITE…NEFL), 53-73 (FIDM…MVIY), 93-113 (WKLW…GLLL), 121-141 (LSNF…FIWI), 171-191 (VLSI…GIIV), 196-216 (SVAA…YSGL), 231-251 (GQAA…LFVI), and 263-283 (FTVF…YGAV).

The protein belongs to the UppP family.

It is found in the cell membrane. The enzyme catalyses di-trans,octa-cis-undecaprenyl diphosphate + H2O = di-trans,octa-cis-undecaprenyl phosphate + phosphate + H(+). Functionally, catalyzes the dephosphorylation of undecaprenyl diphosphate (UPP). Confers resistance to bacitracin. The protein is Undecaprenyl-diphosphatase of Streptococcus thermophilus (strain ATCC BAA-250 / LMG 18311).